A 551-amino-acid polypeptide reads, in one-letter code: CTP synthase (551 aa).

The interval 1 to 273 (MKNTTNTKRT…DSKILELLNI (273 aa)) is amidoligase domain. S21 contacts CTP. S21 contacts UTP. Residues 22-27 (SLGKGL) and D79 contribute to the ATP site. Positions 79 and 147 each coordinate Mg(2+). CTP-binding positions include 154–156 (DIE), 194–199 (KTKPTQ), and K230. UTP-binding positions include 194–199 (KTKPTQ) and K230. The Glutamine amidotransferase type-1 domain maps to 298 to 551 (TIAITGKYVD…ISAAVANKKG (254 aa)). G360 is an L-glutamine binding site. C387 serves as the catalytic Nucleophile; for glutamine hydrolysis. Residues 388–391 (LGMQ), E411, and R479 contribute to the L-glutamine site. Residues H524 and E526 contribute to the active site.

The protein belongs to the CTP synthase family. As to quaternary structure, homotetramer.

It carries out the reaction UTP + L-glutamine + ATP + H2O = CTP + L-glutamate + ADP + phosphate + 2 H(+). It catalyses the reaction L-glutamine + H2O = L-glutamate + NH4(+). The catalysed reaction is UTP + NH4(+) + ATP = CTP + ADP + phosphate + 2 H(+). It functions in the pathway pyrimidine metabolism; CTP biosynthesis via de novo pathway; CTP from UDP: step 2/2. Its activity is regulated as follows. Allosterically activated by GTP, when glutamine is the substrate; GTP has no effect on the reaction when ammonia is the substrate. The allosteric effector GTP functions by stabilizing the protein conformation that binds the tetrahedral intermediate(s) formed during glutamine hydrolysis. Inhibited by the product CTP, via allosteric rather than competitive inhibition. Functionally, catalyzes the ATP-dependent amination of UTP to CTP with either L-glutamine or ammonia as the source of nitrogen. Regulates intracellular CTP levels through interactions with the four ribonucleotide triphosphates. This is CTP synthase from Desulfotalea psychrophila (strain LSv54 / DSM 12343).